Reading from the N-terminus, the 790-residue chain is Probable copper-transporting ATPase SynA (790 aa).

Residues 1–105 are Cytoplasmic-facing; sequence MPAAIVHSAD…IPPLQQQRLQ (105 aa). Residues 14-81 form the HMA domain; it reads TSILVEVEGM…EITGLGFRAQ (68 aa). C25 and C28 together coordinate Cu(+). The helical transmembrane segment at 106–127 threads the bilayer; it reads LAIAAFLLIVSSWGHLGHWLDH. Residues 128-136 lie on the Extracellular side of the membrane; the sequence is PLPGTDQLW. Residues 137–156 traverse the membrane as a helical segment; it reads FHALLATWALLGPGRSILQA. The Cytoplasmic segment spans residues 157-163; it reads GWQGLRC. Residues 164-184 form a helical membrane-spanning segment; that stretch reads GAPNMNSLVLLGTGSAYLASL. Topologically, residues 185–198 are extracellular; it reads VALLWPQLGWVCFF. A helical transmembrane segment spans residues 199-219; that stretch reads DEPVMLLGFILLGRTLEEQAR. Residues 220–358 are Cytoplasmic-facing; the sequence is FRSQAALQNL…KAPVQRFADA (139 aa). The helical transmembrane segment at 359-381 threads the bilayer; the sequence is IAGRFVYGVCAIAALTFGFWATL. At 382–420 the chain is on the extracellular side; the sequence is GSRWWPQVLQQPLPGLLIHAPHHGMEMAHPHSHSPLLLA. A helical membrane pass occupies residues 421–438; it reads LTLAISVLVVACPCALGL. At 439–723 the chain is on the cytoplasmic side; that stretch reads ATPTAILVAT…NLSQMGLRTI (285 aa). The 4-aspartylphosphate intermediate role is filled by D476. 2 residues coordinate Mg(2+): D669 and D673. Residues 724–743 form a helical membrane-spanning segment; it reads RQNLTWALGYNVVMLPLAAG. The Extracellular portion of the chain corresponds to 744-755; the sequence is AFLPAYGLALTP. A helical transmembrane segment spans residues 756 to 774; sequence AIAGACMAVSSLAVVSNSL. Over 775 to 790 the chain is Cytoplasmic; that stretch reads LLRYWFRRSLNHSVSV.

Belongs to the cation transport ATPase (P-type) (TC 3.A.3) family. Type IB subfamily.

The protein localises to the cell membrane. It carries out the reaction Cu(+)(in) + ATP + H2O = Cu(+)(out) + ADP + phosphate + H(+). Functionally, involved in copper transport. The protein is Probable copper-transporting ATPase SynA (synA) of Synechococcus elongatus (strain ATCC 33912 / PCC 7942 / FACHB-805) (Anacystis nidulans R2).